The sequence spans 554 residues: Formate--tetrahydrofolate ligase (554 aa).

67–74 is an ATP binding site; sequence TPTGEGKT.

Belongs to the formate--tetrahydrofolate ligase family.

The catalysed reaction is (6S)-5,6,7,8-tetrahydrofolate + formate + ATP = (6R)-10-formyltetrahydrofolate + ADP + phosphate. It functions in the pathway one-carbon metabolism; tetrahydrofolate interconversion. This Finegoldia magna (strain ATCC 29328 / DSM 20472 / WAL 2508) (Peptostreptococcus magnus) protein is Formate--tetrahydrofolate ligase.